The chain runs to 622 residues: Low affinity potassium transport system protein Kup (622 aa).

The next 12 membrane-spanning stretches (helical) occupy residues 9 to 29 (LSAVTLAAIGVVYGDIGTSPL), 46 to 66 (PDVVFGFLSLIFWMLILVVSV), 101 to 121 (ILVVLGLIGGSFFYGEVVITP), 137 to 157 (PALDPYIVPCSIAVLTLLFVI), 165 to 185 (VGKLFAPVMLVWFLTLALLGL), 213 to 233 (VSFFALGAVVLAITGVEALYA), 247 to 267 (WFTVVLPSLVLNYFGQGALLL), 276 to 296 (PFFLLAPDWALIPLLILATLA), 337 to 357 (IYIPVINWTLYLAVVLVIIGF), 363 to 383 (LAAAYGIAVTGTMVITSILFC), 395 to 415 (FLVVFLLMVLLIIDIPMFSAN), and 416 to 436 (VLKLFSGGWLPLSLGLVMFII).

The protein belongs to the HAK/KUP transporter (TC 2.A.72) family.

The protein resides in the cell inner membrane. It catalyses the reaction K(+)(in) + H(+)(in) = K(+)(out) + H(+)(out). Functionally, responsible for the low-affinity transport of potassium into the cell. Likely operates as a K(+):H(+) symporter. This Yersinia pestis (strain Pestoides F) protein is Low affinity potassium transport system protein Kup.